We begin with the raw amino-acid sequence, 532 residues long: Small ribosomal subunit protein uS2cz (532 aa).

Residues 1–271 form an N-terminal extension region; that stretch reads METLEKNFKK…SPISSKEKKA (271 aa). TRAM domains lie at 38–97, 127–186, and 197–260; these read ALQA…SILN, DFKV…KPIL, and NQMI…KILK.

It belongs to the universal ribosomal protein uS2 family.

It is found in the plastid. The protein localises to the chloroplast. The sequence is that of Small ribosomal subunit protein uS2cz (rps2-1) from Tetradesmus obliquus (Green alga).